The sequence spans 235 residues: Glycerol uptake facilitator protein 2 (235 aa).

A run of 6 helical transmembrane segments spans residues 4–24 (FLGE…SGAA), 39–59 (FICL…GQFG), 62–82 (GHLN…PMAN), 83–103 (VWPY…IVII), 134–154 (VFNF…LLNL), and 165–185 (MVGL…GFAI). Positions 65 to 67 (NPA) match the NPA 1 motif. Positions 186–188 (NPA) match the NPA 2 motif. A helical transmembrane segment spans residues 210-230 (WGYAWVPMFGPLLGGILAAGL).

It belongs to the MIP/aquaporin (TC 1.A.8) family.

Its subcellular location is the cell membrane. In terms of biological role, transporter that facilitates the transmembrane diffusion of water, dihydroxyacetone, glycerol and H(2)O(2). Is not permeable to urea and D/L-lactic acid. The chain is Glycerol uptake facilitator protein 2 from Lactiplantibacillus plantarum (strain ATCC BAA-793 / NCIMB 8826 / WCFS1) (Lactobacillus plantarum).